A 210-amino-acid polypeptide reads, in one-letter code: Ribosomal RNA small subunit methyltransferase G (210 aa).

S-adenosyl-L-methionine is bound by residues glycine 76, leucine 81, 127-128 (VE), and arginine 142.

It belongs to the methyltransferase superfamily. RNA methyltransferase RsmG family.

The protein resides in the cytoplasm. It carries out the reaction guanosine(527) in 16S rRNA + S-adenosyl-L-methionine = N(7)-methylguanosine(527) in 16S rRNA + S-adenosyl-L-homocysteine. In terms of biological role, specifically methylates the N7 position of guanine in position 527 of 16S rRNA. In Vibrio atlanticus (strain LGP32) (Vibrio splendidus (strain Mel32)), this protein is Ribosomal RNA small subunit methyltransferase G.